A 1304-amino-acid polypeptide reads, in one-letter code: MSCMNYASRLSKNEYKGPLGEEEFFEDTEEEKKKVKELIEKIRSSEYIVVHSGAGISTSSGLQDFRGPTGIWTNEHLNELKNKKKRNHDFKDNKRKLKSNDINCKNTSDMCSPSFFHKEKKENTLNIVKRERYYNEDNVDMNACNERVVHPNHVYVNHEDDNNNNNNNNNNDNNLYNNVYNSVGSNDHTNKESILIKKENNSENVRKDIHDKVNTKNVKKIDVKETNNLDPENYVIFGKRKKKVIELHLALPSKTHIMINELINKNIIKFMITQNIDSLHHRCGKHFSKTAEIHGNIFTERCDFCGRRYLRDYLISTISFKPTGSLCFLCSFPPIGVCTDVLLDWNNSYEEFFHLNSIKHSQIADFHFCLGSSFYIVPASSYPSKKKYANANSYSCVINYQKSFLSKEVNLNIHSNVNNISDIIIKEFSLNPLSIRSARITIVRCPINTLDVICDKLISIHNIKMKHKSMRQHSIDYSQMGNKDEKYNNEKYVKRNMTECLYYNKEGECYEKRKYKLMEKKFFPNNQQNEFIPNRINIFEQKFHEHNNNNNNNNNNNNNNNNNNNNNNNNNNNNNNNNNNSSSSIDSSCSINSNYHISKNINPDFSFVENQSNIYENYKEQTFILICPMIINIKTVRLESFHKVYIKLLDDIKGLWFIKTNFSCILEVELWYHSFILLKLDFNKSDPFIQLNAWNVNVAYTYGDDIDDFDYFKNDENIKKPFNLYKNKYISNMRREGHVNNLYTLDNEKVKSNTSNNNNNNNNNNNNNNNNNNNNNNNNNNNNNNNNNNNNNNNNNDNNNNNISDHNIYDDHNNNNNKNHNNYDKDNSNESYYCSEILNEHVHVGYNPNNYEPNCKVYILAYLDNLRTRNINNNVNNNNFSRFNLTQSCKLLYNIYCVLNKDNEQKKNSTIKETYDKLDYFIKNFDFNRDSCLYTNNFINMLIQNERHGNQSRYKFRERRKRLLNDYSSCSSDDDQSGKNIFIFYNLYMNQYKKKEDNEINDIYKKYDVHEKNIYDESKQYVHKVRVRTDLINHKSVYKILKNNYLVNINNMKLMEKKNNSEKLFLINDKDNNSLLSINNKENFNCIPSRQNNVKKNSEYMHEEENNKTNSNENIARLNNNDFIQVMETEKQKKYNSFDKYNSDRSSINDTFDEIKYNKNNDNNNDDNNYDDNKNDDDNNNDDNNNNDDNNNNDDNNNNDDNNNGYIYSPVLFINKKFKLGELVYKIPKYVKPQKIYTPYKKISRNKKYSNTLQKDRYEKWKMLYEELINNENKTYIIDSVLYKEISYLPYWILNYVNDLFECM.

Residues 28-466 (TEEEKKKVKE…LISIHNIKMK (439 aa)) form the Deacetylase sirtuin-type domain. NAD(+)-binding positions include 53–72 (GAGI…TGIW) and 274–277 (QNID). His-294 serves as the catalytic Proton acceptor. Zn(2+)-binding residues include Cys-302, Cys-305, Cys-327, and Cys-330. Residues 371-373 (GSS), 399-401 (NYQ), and Val-417 contribute to the NAD(+) site. 3 disordered regions span residues 545-585 (EHNN…SSSI), 749-827 (KVKS…DKDN), and 1154-1203 (EIKY…DDNN). Composition is skewed to low complexity over residues 548–585 (NNNN…SSSI), 756–806 (NNNN…ISDH), and 1182–1203 (DDNN…DDNN).

The protein belongs to the sirtuin family. Class IV subfamily. Requires Zn(2+) as cofactor.

The catalysed reaction is N(6)-acetyl-L-lysyl-[protein] + NAD(+) + H2O = 2''-O-acetyl-ADP-D-ribose + nicotinamide + L-lysyl-[protein]. Regulates the expression of the surface antigen-coding var genes central to the malaria pathogenesis. Cooperates with Sir2A to mediate silencing and mutual exclusive expression of only 1 of the 60 subtelomeric var genes at a time, coding for functionally different but epitopically variant versions of the erythrocyte membrane protein 1 (PfEMP1) molecule, to evade the detection by host immune surveillance. The sequence is that of NAD-dependent protein deacetylase Sir2B from Plasmodium falciparum (isolate 3D7).